The sequence spans 258 residues: 6-phosphogluconolactonase (258 aa).

N-acetylalanine is present on Ala2. Ser49 is modified (phosphoserine). Lys180 is subject to N6-acetyllysine.

This sequence belongs to the glucosamine/galactosamine-6-phosphate isomerase family. 6-phosphogluconolactonase subfamily.

Its subcellular location is the cytoplasm. It catalyses the reaction 6-phospho-D-glucono-1,5-lactone + H2O = 6-phospho-D-gluconate + H(+). Its pathway is carbohydrate degradation; pentose phosphate pathway; D-ribulose 5-phosphate from D-glucose 6-phosphate (oxidative stage): step 2/3. Functionally, hydrolysis of 6-phosphogluconolactone to 6-phosphogluconate. The protein is 6-phosphogluconolactonase of Homo sapiens (Human).